A 178-amino-acid polypeptide reads, in one-letter code: Large ribosomal subunit protein bL25 (178 aa).

It belongs to the bacterial ribosomal protein bL25 family. CTC subfamily. Part of the 50S ribosomal subunit; part of the 5S rRNA/L5/L18/L25 subcomplex. Contacts the 5S rRNA. Binds to the 5S rRNA independently of L5 and L18.

Its function is as follows. This is one of the proteins that binds to the 5S RNA in the ribosome where it forms part of the central protuberance. The sequence is that of Large ribosomal subunit protein bL25 from Helicobacter pylori (strain ATCC 700392 / 26695) (Campylobacter pylori).